The primary structure comprises 788 residues: LPS-assembly protein LptD (788 aa).

The first 23 residues, 1 to 23, serve as a signal peptide directing secretion; sequence MSLTSRSLLATMISLALYGPAMA.

It belongs to the LptD family. As to quaternary structure, component of the lipopolysaccharide transport and assembly complex. Interacts with LptE and LptA.

The protein resides in the cell outer membrane. Functionally, together with LptE, is involved in the assembly of lipopolysaccharide (LPS) at the surface of the outer membrane. In Photobacterium profundum (strain SS9), this protein is LPS-assembly protein LptD.